The sequence spans 1681 residues: MALPIKFHEHLQLPNAGIRVPNITFSNVTMESDKNIVVREMIGDQQQVVIIDLADTANPTRRPISADSVIMHPTAKILALKSGKTLQIFNIELKAKVKAHQNVEDVVYWKWISEKTIALVSDTAVYHWSIEGDAAPVKMFDRHQSLAGTQIINYRADAENKWLVLIGISAKDSRVVGSMQLYSTERKVSQPIEGHAACFVRFKVDGNQNPSNLFCFSVKTDNGGKLHVIEVGTPAAGNTPFQKKNVDVPYTADTAGDFPVSMQVSAKQGIIYLVTKQGYVHLYDVESGTRIYSNRISTDTVFVTCEYTATGGIMGINRKGQVLSVSIDEANLVPFVTNQLQNPDLALKLAVRCDLPGAEELFVRKFNLLFSNGQFGESAKVAASAPQGILRTPATIQKFQQCPSTGPGPSPLLQYFGILLDQGKLNKYETLELCRPVLAQGRKELITKWLNDQKLECCEELGDLIKPHDVNTALSVYLRGNVPHKVVQSFAETGQFDKIVMYAKRVGFQPDYLFQLRQILRNSNPDHGAKFAQLLVSESENGEPLADLSQIIDCFMEVQAVQPCTSFLLEVLKGDKPEEGHLQTRLLEMNLLAAPAVADAILANKMFSHYDRAAIGQLCEKAGLLQRALEHFTDLYDIKRTVVHTHLLKPDWLVGYFGSLSVEDSVECLKAMLTQNIRQNLQVVVQIASKYHEQLGADKLIEMFENHKSYEGLFYFLGSIVNFSQDPEVHFKYIQAATRTGQIKEVERICRESQCYDAERVKNFLKEAKLNDQLPLIIVCDRHNMVHDLVLYLYRNQLQKYIEVFVQKVNAARLPIVVGALLDVDCSEDAIKQLIINTRGKFDIDELVEEVEKRNRLKLLNHWLESKIQEGATDAATHNAMAKIYIDSNNNPERFLKENPYYDSKVVGKYCEKRDPHYAFLSYERGQCDAELINVCNENSLFKNLARYLVKRRDFTLWEQVLNEENVHRRQLIDQVVQTALSETQDPEDISVTVKAFMAADLPNELIELLEKIVLDNSAFSEHRNLQNLLILTAMRADRTRVMEYIQKLDNYDAPDIANIAITSELYEEAFAIFKKFDVNSSAINVLIENVNNLDRAYEFAEKCNQSDVWASLAKAQLQQNLVKEAVDSFIKADDPGAYMEVVNKCSQTEHWEDLVRYLQMARKKSRESYIETELVFALAKTGRLTELEEFIAGPNHAQIGQIGDRCFDNGMFDSAKILFNNVSNFAKLSVTLVRLGEYQGAVDAARKANSTKTWKQVCFSCVENGEFRLAQMCGLHIVVHADELEELINFYQDRGHFEELIALLEAALGLERAHMGMFTELAILYSKYKPEKMREHLELFWSRVNIPKVLRAAEQAHLWSELVFLYDKYEEYDNAALTMMQHPTESWREQHFKEVIAKVANVELYYKAMQFYLDYKPLLLNDLLTVLSPRLDHSRTVLFFNKLKQIPLVKPYLRQVQNLNNKAINEALNQLLIDEEDHAGLRSSIEAQDNFDNITLAQQLEKHPLVEFRRISAYLFKGNNRWKQSIELCKKDKLYKDAMEYAAESRNGELAEELLSFFLDEKLYDCFAASLYHCYDLLHPDVIMELAWKHKIMDYAMPYMIQVMRDYQTRLEKLERSEHERKEEKAEQQQNNGMTMEPQLMLTYGAPAPQMTYPGTTGGYGGQPAYGQPGQPGYNAPGFM.

WD40-like repeat regions lie at residues 22–65 (NITF…RPIS), 66–105 (ADSV…NVED), 106–147 (VVYW…QSLA), 148–193 (GTQI…QPIE), 194–255 (GHAA…ADTA), 256–299 (GDFP…ISTD), and 300–328 (TVFV…VSID). CHCR repeat units lie at residues 539 to 685 (SENG…QVVV), 688 to 830 (ASKY…SEDA), 835 to 974 (IINT…QLID), 981 to 1126 (LSET…VKEA), 1130 to 1271 (FIKA…FRLA), 1276 to 1422 (LHIV…LLLN), and 1425 to 1568 (LTVL…YDCF). Residues 1616–1628 (ERSEHERKEEKAE) show a composition bias toward basic and acidic residues. The tract at residues 1616–1635 (ERSEHERKEEKAEQQQNNGM) is disordered.

Belongs to the clathrin heavy chain family. As to quaternary structure, clathrin triskelions, composed of 3 heavy chains and 3 light chains, are the basic subunits of the clathrin coat. May interact with beta arrestin arr-1.

The protein localises to the cytoplasmic vesicle membrane. It is found in the membrane. Its subcellular location is the coated pit. Its function is as follows. Clathrin is the major protein of the polyhedral coat of coated pits and vesicles. May play a role in yolk protein clatherin-mediated endocytosis by oocytes during oogenesis. This Caenorhabditis elegans protein is Probable clathrin heavy chain 1 (chc-1).